The primary structure comprises 378 residues: MKIPEFKEYYQQLISTSSISSTDSSWDEGNAKVIHKLAQWCEDLGCEVEIEEIEKGKLNLLAKLGSGEGGLLLAGHTDTVPYDQGRWNYDPHTLTEANDRFYGLGTADMKGFFAFILEAIKNINWKDQSKPLYILATCDEETTMLGARHFASNTSIQPDYCIIGEPTNLMPIRGHKGHVANAVRVTGKSGHSSNPAYGVNALEIMNEIMFALMNLKNKLVKEYHNPGFSIPYPTLNLGHIHGGDSPNRICGCCELHYDVRPLPGISLDGLDNMLRDALKDVEEKWPGRIEITPLHEPIPGYECSADSPIVTSVAEICGQEVETVNYCTEAPFLQDLCPTLVLGPGSIEQAHQPDEFLAFSFIDPTINILSKLMYKHCF.

Zn(2+) is bound at residue histidine 76. Residue aspartate 78 is part of the active site. A Zn(2+)-binding site is contributed by aspartate 108. Glutamate 140 is a catalytic residue. Zn(2+)-binding residues include glutamate 141, glutamate 165, and histidine 351.

The protein belongs to the peptidase M20A family. ArgE subfamily. As to quaternary structure, homodimer. Requires Zn(2+) as cofactor. The cofactor is Co(2+). It depends on glutathione as a cofactor.

The protein localises to the cytoplasm. It carries out the reaction N(2)-acetyl-L-ornithine + H2O = L-ornithine + acetate. It participates in amino-acid biosynthesis; L-arginine biosynthesis; L-ornithine from N(2)-acetyl-L-ornithine (linear): step 1/1. Catalyzes the hydrolysis of the amide bond of N(2)-acetylated L-amino acids. Cleaves the acetyl group from N-acetyl-L-ornithine to form L-ornithine, an intermediate in L-arginine biosynthesis pathway, and a branchpoint in the synthesis of polyamines. In Aliivibrio salmonicida (strain LFI1238) (Vibrio salmonicida (strain LFI1238)), this protein is Acetylornithine deacetylase.